Here is a 105-residue protein sequence, read N- to C-terminus: ATP-dependent Clp protease adapter protein ClpS (105 aa).

The protein belongs to the ClpS family. As to quaternary structure, binds to the N-terminal domain of the chaperone ClpA.

In terms of biological role, involved in the modulation of the specificity of the ClpAP-mediated ATP-dependent protein degradation. The sequence is that of ATP-dependent Clp protease adapter protein ClpS from Aeromonas salmonicida (strain A449).